Reading from the N-terminus, the 543-residue chain is Chaperonin GroEL (543 aa).

ATP-binding positions include 29-32 (TLGP), 86-90 (DGTTT), glycine 413, 476-478 (NAA), and aspartate 492.

The protein belongs to the chaperonin (HSP60) family. As to quaternary structure, forms a cylinder of 14 subunits composed of two heptameric rings stacked back-to-back. Interacts with the co-chaperonin GroES.

The protein localises to the cytoplasm. It carries out the reaction ATP + H2O + a folded polypeptide = ADP + phosphate + an unfolded polypeptide.. Its function is as follows. Together with its co-chaperonin GroES, plays an essential role in assisting protein folding. The GroEL-GroES system forms a nano-cage that allows encapsulation of the non-native substrate proteins and provides a physical environment optimized to promote and accelerate protein folding. In Brevibacillus choshinensis, this protein is Chaperonin GroEL.